Here is a 261-residue protein sequence, read N- to C-terminus: Phosphatidylglycerol--prolipoprotein diacylglyceryl transferase (261 aa).

A run of 4 helical transmembrane segments spans residues 13-33, 50-70, 86-106, and 112-132; these read LQIR…YWYI, VISW…ILFY, WNGG…MYIF, and IDVL…IFFG. Arg-133 is an a 1,2-diacyl-sn-glycero-3-phospho-(1'-sn-glycerol) binding site. 3 consecutive transmembrane segments (helical) span residues 169–189, 197–217, and 232–252; these read LYEA…LFFF, GMLS…IEFV, and ITMG…FIKL.

Belongs to the Lgt family.

It localises to the cell inner membrane. The enzyme catalyses L-cysteinyl-[prolipoprotein] + a 1,2-diacyl-sn-glycero-3-phospho-(1'-sn-glycerol) = an S-1,2-diacyl-sn-glyceryl-L-cysteinyl-[prolipoprotein] + sn-glycerol 1-phosphate + H(+). Its pathway is protein modification; lipoprotein biosynthesis (diacylglyceryl transfer). Its function is as follows. Catalyzes the transfer of the diacylglyceryl group from phosphatidylglycerol to the sulfhydryl group of the N-terminal cysteine of a prolipoprotein, the first step in the formation of mature lipoproteins. This chain is Phosphatidylglycerol--prolipoprotein diacylglyceryl transferase, found in Ehrlichia canis (strain Jake).